Here is a 507-residue protein sequence, read N- to C-terminus: ATP synthase subunit alpha, chloroplastic (507 aa).

170–177 (GDRQTGKT) provides a ligand contact to ATP. Disordered stretches follow at residues 278–325 (PRRP…TQAG), 392–430 (EPEASAQFASDPDKATRNQSARGQRSRELLKQSQPAPLP), and 452–471 (GQVQGSPAQSREYLVTNKPE). Basic and acidic residues predominate over residues 282-303 (PGREAHPGDVPHLHPRPPERAA). The segment covering 305 to 322 (LSSQPGEGSTTASPTVET) has biased composition (polar residues).

It belongs to the ATPase alpha/beta chains family. As to quaternary structure, F-type ATPases have 2 components, CF(1) - the catalytic core - and CF(0) - the membrane proton channel. CF(1) has five subunits: alpha(3), beta(3), gamma(1), delta(1), epsilon(1). CF(0) has four main subunits: a, b, b' and c.

It is found in the plastid. The protein resides in the chloroplast thylakoid membrane. The enzyme catalyses ATP + H2O + 4 H(+)(in) = ADP + phosphate + 5 H(+)(out). Its function is as follows. Produces ATP from ADP in the presence of a proton gradient across the membrane. The alpha chain is a regulatory subunit. The protein is ATP synthase subunit alpha, chloroplastic of Selaginella uncinata (Blue spike-moss).